A 235-amino-acid chain; its full sequence is 2,3-bisphosphoglycerate-dependent phosphoglycerate mutase (235 aa).

Substrate is bound by residues 8-15 (RHGESIWN), 21-22 (TG), arginine 58, 110-113 (ERYY), lysine 121, 137-138 (RR), and 181-182 (GN). Histidine 9 serves as the catalytic Tele-phosphohistidine intermediate. The active-site Proton donor/acceptor is the glutamate 110.

This sequence belongs to the phosphoglycerate mutase family. BPG-dependent PGAM subfamily.

It carries out the reaction (2R)-2-phosphoglycerate = (2R)-3-phosphoglycerate. Its pathway is carbohydrate degradation; glycolysis; pyruvate from D-glyceraldehyde 3-phosphate: step 3/5. Catalyzes the interconversion of 2-phosphoglycerate and 3-phosphoglycerate. This is 2,3-bisphosphoglycerate-dependent phosphoglycerate mutase from Methanococcus vannielii (strain ATCC 35089 / DSM 1224 / JCM 13029 / OCM 148 / SB).